Here is a 495-residue protein sequence, read N- to C-terminus: Calcium-dependent protein kinase 11 (495 aa).

One can recognise a Protein kinase domain in the interval 26 to 284 (YLLGKKLGQG…AHEALCHPWI (259 aa)). ATP contacts are provided by residues 32 to 40 (LGQGQFGTT) and Lys55. The active-site Proton acceptor is the Asp150. At Ser190 the chain carries Phosphoserine. The segment at 290-320 (APDKPLDPAVLSRLKQFSQMNKIKKMALRVI) is autoinhibitory domain. 4 consecutive EF-hand domains span residues 327–362 (EEIG…VGSE), 363–398 (LMES…MNKM), 399–434 (EREE…FGLC), and 438–468 (LDDM…GDGV). Ca(2+) is bound by residues Asp340, Asp342, Ser344, Thr346, Glu351, Asp376, Asp378, Ser380, Thr382, Glu387, Asp412, Asp414, Ser416, Tyr418, Glu423, Asp446, Asp448, Asp450, Lys452, and Glu457.

The protein belongs to the protein kinase superfamily. Ser/Thr protein kinase family. CDPK subfamily. Interacts with Di19.

It localises to the cytoplasm. The protein resides in the nucleus. It carries out the reaction L-seryl-[protein] + ATP = O-phospho-L-seryl-[protein] + ADP + H(+). It catalyses the reaction L-threonyl-[protein] + ATP = O-phospho-L-threonyl-[protein] + ADP + H(+). Activated by calcium. Autophosphorylation may play an important role in the regulation of the kinase activity. May play a role in signal transduction pathways that involve calcium as a second messenger. Functions as a regulator of the calcium-mediated abscisic acid (ABA) signaling pathway. Phosphorylates ABA-responsive transcription factors ABF1 and ABF4 in vitro. The protein is Calcium-dependent protein kinase 11 (CPK11) of Arabidopsis thaliana (Mouse-ear cress).